The sequence spans 500 residues: NADH-quinone oxidoreductase subunit N (500 aa).

14 consecutive transmembrane segments (helical) span residues 6–26, 40–60, 69–89, 106–125, 129–151, 164–184, 207–227, 239–259, 276–296, 302–322, 337–357, 380–400, 417–437, and 464–484; these read SWIA…IALV, ALTL…ALGG, MVVV…ALMI, GGEF…VMIS, FLVL…ALRR, FVLG…LYGA, LVFG…AVPF, PTAV…AMTI, MLAL…VAQT, LAFS…AGVV, MFYA…ILLL, YAGV…LVGF, SYLV…FYYL, and IVLA…SSLM.

Belongs to the complex I subunit 2 family. As to quaternary structure, NDH-1 is composed of 14 different subunits. Subunits NuoA, H, J, K, L, M, N constitute the membrane sector of the complex.

It is found in the cell inner membrane. It carries out the reaction a quinone + NADH + 5 H(+)(in) = a quinol + NAD(+) + 4 H(+)(out). Functionally, NDH-1 shuttles electrons from NADH, via FMN and iron-sulfur (Fe-S) centers, to quinones in the respiratory chain. The immediate electron acceptor for the enzyme in this species is believed to be ubiquinone. Couples the redox reaction to proton translocation (for every two electrons transferred, four hydrogen ions are translocated across the cytoplasmic membrane), and thus conserves the redox energy in a proton gradient. This chain is NADH-quinone oxidoreductase subunit N, found in Polaromonas naphthalenivorans (strain CJ2).